Here is a 558-residue protein sequence, read N- to C-terminus: AP2-like ethylene-responsive transcription factor AIL5 (558 aa).

A compositionally biased stretch (low complexity) spans Met1–Thr54. 3 disordered regions span residues Met1 to Leu65, Ser74 to Val93, and His166 to Glu195. 2 consecutive DNA-binding regions (AP2/ERF) follow at residues Ile203–Pro269 and Met305–Asp363. Residues Ser387–Ser406 form a disordered region.

The protein belongs to the AP2/ERF transcription factor family. AP2 subfamily. Expressed in roots, seedlings, inflorescence, and siliques. Also detected at low levels in leaves.

The protein localises to the nucleus. Its function is as follows. Probably acts as a transcriptional activator. Binds to the GCC-box pathogenesis-related promoter element. May be involved in the regulation of gene expression by stress factors and by components of stress signal transduction pathways. Involved in the regulation of floral organs size. The sequence is that of AP2-like ethylene-responsive transcription factor AIL5 from Arabidopsis thaliana (Mouse-ear cress).